The following is a 65-amino-acid chain: Large ribosomal subunit protein bL33c (65 aa).

Belongs to the bacterial ribosomal protein bL33 family.

Its subcellular location is the plastid. The protein localises to the chloroplast. In Gracilaria tenuistipitata var. liui (Red alga), this protein is Large ribosomal subunit protein bL33c.